A 145-amino-acid polypeptide reads, in one-letter code: UPF0763 protein WS1752 (145 aa).

Belongs to the UPF0763 family.

The protein is UPF0763 protein WS1752 of Wolinella succinogenes (strain ATCC 29543 / DSM 1740 / CCUG 13145 / JCM 31913 / LMG 7466 / NCTC 11488 / FDC 602W) (Vibrio succinogenes).